A 354-amino-acid polypeptide reads, in one-letter code: Nicotinate-nucleotide--dimethylbenzimidazole phosphoribosyltransferase (354 aa).

The active-site Proton acceptor is the Glu-319.

This sequence belongs to the CobT family.

The catalysed reaction is 5,6-dimethylbenzimidazole + nicotinate beta-D-ribonucleotide = alpha-ribazole 5'-phosphate + nicotinate + H(+). It functions in the pathway nucleoside biosynthesis; alpha-ribazole biosynthesis; alpha-ribazole from 5,6-dimethylbenzimidazole: step 1/2. Functionally, catalyzes the synthesis of alpha-ribazole-5'-phosphate from nicotinate mononucleotide (NAMN) and 5,6-dimethylbenzimidazole (DMB). In Pelodictyon phaeoclathratiforme (strain DSM 5477 / BU-1), this protein is Nicotinate-nucleotide--dimethylbenzimidazole phosphoribosyltransferase.